Here is a 375-residue protein sequence, read N- to C-terminus: Actin (375 aa).

Belongs to the actin family.

Its subcellular location is the cytoplasm. It is found in the cytoskeleton. The catalysed reaction is ATP + H2O = ADP + phosphate + H(+). Its function is as follows. Actins are highly conserved proteins that are involved in various types of cell motility and are ubiquitously expressed in all eukaryotic cells. The polypeptide is Actin (Sterkiella cavicola (Ciliate)).